The chain runs to 390 residues: Carbamoyl phosphate synthase small chain (390 aa).

Residues 1–198 (MTSTPTPTPT…LGEGYAVGPE (198 aa)) are CPSase. L-glutamine is bound by residues S53, G250, and G252. Residues 202 to 390 (RVVVLDYGVK…VGELKGRVEA (189 aa)) enclose the Glutamine amidotransferase type-1 domain. The active-site Nucleophile is the C279. L-glutamine contacts are provided by L280, Q283, N321, G323, and F324. Residues H363 and E365 contribute to the active site.

The protein belongs to the CarA family. In terms of assembly, composed of two chains; the small (or glutamine) chain promotes the hydrolysis of glutamine to ammonia, which is used by the large (or ammonia) chain to synthesize carbamoyl phosphate. Tetramer of heterodimers (alpha,beta)4.

It catalyses the reaction hydrogencarbonate + L-glutamine + 2 ATP + H2O = carbamoyl phosphate + L-glutamate + 2 ADP + phosphate + 2 H(+). The catalysed reaction is L-glutamine + H2O = L-glutamate + NH4(+). It participates in amino-acid biosynthesis; L-arginine biosynthesis; carbamoyl phosphate from bicarbonate: step 1/1. It functions in the pathway pyrimidine metabolism; UMP biosynthesis via de novo pathway; (S)-dihydroorotate from bicarbonate: step 1/3. Small subunit of the glutamine-dependent carbamoyl phosphate synthetase (CPSase). CPSase catalyzes the formation of carbamoyl phosphate from the ammonia moiety of glutamine, carbonate, and phosphate donated by ATP, constituting the first step of 2 biosynthetic pathways, one leading to arginine and/or urea and the other to pyrimidine nucleotides. The small subunit (glutamine amidotransferase) binds and cleaves glutamine to supply the large subunit with the substrate ammonia. This chain is Carbamoyl phosphate synthase small chain, found in Maricaulis maris (strain MCS10) (Caulobacter maris).